A 137-amino-acid chain; its full sequence is SMR2 protein (137 aa).

An N-terminal signal peptide occupies residues 1 to 18 (MLVVLLTAALLALSSAQN). A disordered region spans residues 14–113 (SSAQNTDEEV…LHHRENLRPQ (100 aa)). Positions 75 to 85 (QQQQPLPVENQ) are enriched in low complexity. A compositionally biased stretch (basic and acidic residues) spans 99-110 (PPPETLHHRENL).

The protein resides in the secreted. Unknown, male-specific function. This chain is SMR2 protein (Smr2), found in Rattus norvegicus (Rat).